The sequence spans 160 residues: Cytochrome c-type biogenesis protein CcmE (160 aa).

Topologically, residues 1 to 8 (MSAPRKTR) are cytoplasmic. The helical; Signal-anchor for type II membrane protein transmembrane segment at 9-29 (LYAILAVVCGAVLTIALMLYA) threads the bilayer. The Periplasmic segment spans residues 30-160 (LSSNIDLFYT…PAAGPEGKRL (131 aa)). Heme contacts are provided by histidine 130 and tyrosine 134.

The protein belongs to the CcmE/CycJ family.

Its subcellular location is the cell inner membrane. Heme chaperone required for the biogenesis of c-type cytochromes. Transiently binds heme delivered by CcmC and transfers the heme to apo-cytochromes in a process facilitated by CcmF and CcmH. The chain is Cytochrome c-type biogenesis protein CcmE from Pectobacterium atrosepticum (strain SCRI 1043 / ATCC BAA-672) (Erwinia carotovora subsp. atroseptica).